We begin with the raw amino-acid sequence, 143 residues long: Hemoglobin-1 (143 aa).

Ser-2 carries the post-translational modification N-acetylserine. One can recognise a Globin domain in the interval 2–143 (SLSAAQKDNV…ALMGMIRPNM (142 aa)). His-97 serves as a coordination point for heme b.

This sequence belongs to the globin family. In terms of assembly, monomer.

It localises to the cytoplasm. Functionally, serves to transport hydrogen sulfide to autotrophic bacteria. The polypeptide is Hemoglobin-1 (Phacoides pectinatus (Thick lucine)).